Reading from the N-terminus, the 58-residue chain is Large ribosomal subunit protein eL37 (58 aa).

Residues 1 to 17 (MTGAGTPSQGKKNTTTH) are compositionally biased toward polar residues. Positions 1-26 (MTGAGTPSQGKKNTTTHTKCRRCGEK) are disordered. 4 residues coordinate Zn(2+): Cys-20, Cys-23, Cys-35, and Cys-38. Residues 20-38 (CRRCGEKSYHTKKKVCSSC) form a C4-type zinc finger.

This sequence belongs to the eukaryotic ribosomal protein eL37 family. Zn(2+) serves as cofactor.

Binds to the 23S rRNA. The chain is Large ribosomal subunit protein eL37 from Halobacterium salinarum (strain ATCC 29341 / DSM 671 / R1).